Consider the following 1165-residue polypeptide: Activity-dependent neuroprotector homeobox protein 2 (1165 aa).

The C2H2-type 1 zinc finger occupies 73–96; it reads YCCSLCRYSTKVLTSLKNHLHRYH. A C2H2-type 2; degenerate zinc finger spans residues 106-128; sequence IPCPNCPFSSQPRVVGKHFRMFH. Lysine 146 participates in a covalent cross-link: Glycyl lysine isopeptide (Lys-Gly) (interchain with G-Cter in SUMO2). The C2H2-type 3; degenerate zinc finger occupies 155-178; the sequence is FTCLKCNFSNTLYYSMKKHVLVAH. A C2H2-type 4 zinc finger spans residues 215–240; sequence YYCKKCSAIASSQDALMYHILTSDAH. Residues 303–318 show a composition bias toward low complexity; it reads SGTVQSVTVTPGTSGS. Residues 303–327 form a disordered region; that stretch reads SGTVQSVTVTPGTSGSLTHSPPTTA. A C2H2-type 5; degenerate zinc finger spans residues 696–718; that stretch reads KTCPVCNELFPSNVYQVHMEVAH. The C2H2-type 6; degenerate zinc-finger motif lies at 724 to 746; that stretch reads QLCQVCNELFPANVYQVHMEVAH. The segment at 777-798 adopts a C2H2-type 7; degenerate zinc-finger fold; that stretch reads VRCLSCKCLVSQEELMHHLLMH. 2 C2H2-type zinc fingers span residues 800 to 823 and 905 to 935; these read LGCL…RTKH and LTCP…PTVH. Positions 1005 to 1068 are disordered; sequence PVKRKLPEGH…SGPSEDSLQA (64 aa). Residues lysine 1009 and lysine 1048 each participate in a glycyl lysine isopeptide (Lys-Gly) (interchain with G-Cter in SUMO2) cross-link. A compositionally biased stretch (basic and acidic residues) spans 1009–1024; the sequence is KLPEGHLGPEDQRDGE. The segment at residues 1090–1132 is a DNA-binding region (homeobox); sequence DYFHRRPYPSRKEVELLSSLLWVWKIDVASFFGKRRYICMKAI.

This sequence belongs to the krueppel C2H2-type zinc-finger protein family. May interact with SMARCA4/BRG1. Expressed widely, with the highest level in the brain.

It localises to the nucleus. Its function is as follows. May be involved in transcriptional regulation. May play a role in neuronal function; perhaps involved in protection of brain tissues from oxidative stress. May be involved in erythroid differentiation. The chain is Activity-dependent neuroprotector homeobox protein 2 (Adnp2) from Mus musculus (Mouse).